Consider the following 510-residue polypeptide: Allene oxide synthase 2, chloroplastic (510 aa).

The transit peptide at 1–31 (MALTLSFSLPLPSLHQKIPSKYSTFRPIIVS) directs the protein to the chloroplast. Heme b is bound by residues lysine 127, histidine 158, and lysine 162. (13S)-hydroperoxy-(9Z,11E)-octadecadienoate contacts are provided by asparagine 315 and lysine 321. A (13S)-hydroperoxy-(9Z,11E,15Z)-octadecatrienoate-binding site is contributed by asparagine 315. Residues lysine 463 and cysteine 465 each coordinate heme b.

It belongs to the cytochrome P450 family. The cofactor is heme b. In terms of tissue distribution, expressed in flower buds, leaves, roots, stems, petioles and cotyledons. Not detected in ripe fruits. Expressed in sieve elements.

It localises to the plastid. The protein localises to the chloroplast inner membrane. The catalysed reaction is (13S)-hydroperoxy-(9Z,11E,15Z)-octadecatrienoate = (9Z,13S,15Z)-12,13-epoxyoctadeca-9,11,15-trienoate + H2O. It catalyses the reaction (13S)-hydroperoxy-(9Z,11E)-octadecadienoate = (9Z,13S)-12,13-epoxyoctadeca-9,11-dienoate + H2O. In terms of biological role, cytochrome P450 of the CYP74A subfamily involved in the biosynthesis of jasmonic acid from lipoxygenase-derived hydroperoxides of free fatty acids. Catalyzes the synthesis of unstable allene oxide, which is further converted spontaneously by hydrolysis or cyclization. Metabolizes 13- but not 9-hydroperoxides of linoleic and linolenic acids. Can use 15S-hydroperoxy-11(Z),13(E),17(Z)-eicosatrienoic acid (15-HPET) and 13S-hydroperoxy-9(Z),11(E),15(Z)-octadecatrienoic acid (13-HPOT) as substrates, but only 50% activity with 13S-hydroperoxy-9(Z),11(E)-octadecadienoic acid (13-HPOD). The chain is Allene oxide synthase 2, chloroplastic from Solanum lycopersicum (Tomato).